A 1238-amino-acid polypeptide reads, in one-letter code: Lysine-specific demethylase JMJ703 (1238 aa).

The segment at 56–79 (EECQPSAAVSRSDTPCSTSGTQTC) is disordered. The segment covering 62–79 (AAVSRSDTPCSTSGTQTC) has biased composition (polar residues). The JmjN domain maps to 154-195 (APVFYPTEEEFEDTLKYIESIRPMAEPYGICRIVPPSSWKPP). A disordered region spans residues 215-266 (KVDKLQNRKSSKKGRRGGMMKRRKLAESEENSATAHTQTGMQQSPERFGFEP). Residues 221–238 (NRKSSKKGRRGGMMKRRK) show a composition bias toward basic residues. The segment covering 245–259 (NSATAHTQTGMQQSP) has biased composition (polar residues). Residues 348 to 514 (KYAQSGWNLN…IGHNAVELYR (167 aa)) form the JmjC domain. 3 residues coordinate Fe cation: His394, Glu396, and His482. Disordered regions lie at residues 699 to 725 (GPRR…QKDE), 777 to 798 (YNGG…SSPS), 834 to 863 (TGDS…SSLE), and 910 to 978 (ASSQ…LQRT). Low complexity predominate over residues 706–719 (SQASAVSLVSSSTS). The span at 910–923 (ASSQQFVRTGPWTQ) shows a compositional bias: polar residues. The segment covering 924-936 (SASHEASSPSTSA) has biased composition (low complexity). A compositionally biased stretch (polar residues) spans 964–978 (SFSNQQPNDGRLQRT). In terms of domain architecture, FYR N-terminal spans 1019–1077 (VVHRFKCSVEPLEIGVVLSGRLWSSSQAIFPKGFRSRVKYFSIVDPIQMAYYISEILDA). In terms of domain architecture, FYR C-terminal spans 1079-1169 (MQGPLFMVKL…HICTEYWRSR (91 aa)).

Fe(2+) serves as cofactor. As to expression, expressed in roots, leaf sheaths, stems and panicles.

It localises to the nucleus. The catalysed reaction is N(6),N(6),N(6)-trimethyl-L-lysyl(4)-[histone H3] + 3 2-oxoglutarate + 3 O2 = L-lysyl(4)-[histone H3] + 3 formaldehyde + 3 succinate + 3 CO2. Histone demethylase that demethylates 'Lys-4' (H3K4me) of histone H3 with a specific activity for H3K4me3, H3K4me2 and H3K4me1. No activity on H3K9me3/2/1, H3K27me3/2/1 and H3K36me3/2/1. Involved in the control of stem elongation by regulating methylation states of H3K4me3 on cytokinin oxidase (CKX) gene family, which may cause increased expression of CKX genes and reduced cytokinin levels. Prevents ectopic retrotransposition by regulating the levels of H3K4me3 in two non-LTR retrotransposons KARMA and LINE-1 (L1) and reinforcing their repressed states. The polypeptide is Lysine-specific demethylase JMJ703 (JMJ703) (Oryza sativa subsp. japonica (Rice)).